Consider the following 151-residue polypeptide: Group 10 secretory phospholipase A2 (151 aa).

The first 17 residues, 1–17 (MLLLLLLLLLGPGSCLS), serve as a signal peptide directing secretion. The propeptide occupies 18–28 (EATRRSHVYKR). Intrachain disulfides connect Cys-39–Cys-97, Cys-53–Cys-143, Cys-55–Cys-71, Cys-70–Cys-125, Cys-76–Cys-150, Cys-77–Cys-118, Cys-86–Cys-111, and Cys-104–Cys-116. The Ca(2+) site is built by Tyr-54, Gly-56, and Gly-58. Residue His-74 is part of the active site. Asp-75 provides a ligand contact to Ca(2+). Asp-119 is a catalytic residue.

This sequence belongs to the phospholipase A2 family. In terms of assembly, interacts with PLA2R1; this interaction mediates PLA2G10 clearance and inactivation. It depends on Ca(2+) as a cofactor.

It is found in the secreted. The protein localises to the lysosome. Its subcellular location is the cytoplasmic vesicle. It localises to the secretory vesicle. The protein resides in the acrosome. The enzyme catalyses a 1,2-diacyl-sn-glycero-3-phosphocholine + H2O = a 1-acyl-sn-glycero-3-phosphocholine + a fatty acid + H(+). The catalysed reaction is 1-hexadecanoyl-2-(9Z-octadecenoyl)-sn-glycero-3-phosphocholine + H2O = 1-hexadecanoyl-sn-glycero-3-phosphocholine + (9Z)-octadecenoate + H(+). It carries out the reaction 1-octadecanoyl-2-(5Z,8Z,11Z,14Z-eicosatetraenoyl)-sn-glycero-3-phosphocholine + H2O = 1-octadecanoyl-sn-glycero-3-phosphocholine + (5Z,8Z,11Z,14Z)-eicosatetraenoate + H(+). It catalyses the reaction 1,2-dihexadecanoyl-sn-glycero-3-phosphocholine + H2O = 1-hexadecanoyl-sn-glycero-3-phosphocholine + hexadecanoate + H(+). The enzyme catalyses 1-hexadecanoyl-2-(9Z-octadecenoyl)-sn-glycero-3-phosphoglycerol + H2O = 1-hexadecanoyl-sn-glycero-3-phosphoglycerol + (9Z)-octadecenoate + H(+). The catalysed reaction is 1,2-dihexadecanoyl-sn-glycero-3-phospho-(1'-sn-glycerol) + H2O = 1-hexadecanoyl-sn-glycero-3-phospho-(1'-sn-glycerol) + hexadecanoate + H(+). It carries out the reaction 1-hexadecanoyl-2-(9Z-octadecenoyl)-sn-glycero-3-phospho-L-serine + H2O = 1-hexadecanoyl-sn-glycero-3-phospho-L-serine + (9Z)-octadecenoate + H(+). It catalyses the reaction 1-hexadecanoyl-2-(9Z,12Z-octadecadienoyl)-sn-glycero-3-phosphoethanolamine + H2O = 1-hexadecanoyl-sn-glycero-3-phosphoethanolamine + (9Z,12Z)-octadecadienoate + H(+). The enzyme catalyses 1-hexadecanoyl-2-(9Z-octadecenoyl)-sn-glycero-3-phosphate + H2O = 1-hexadecanoyl-sn-glycero-3-phosphate + (9Z)-octadecenoate + H(+). The catalysed reaction is 1-O-hexadecyl-2-acetyl-sn-glycero-3-phosphocholine + H2O = 1-O-hexadecyl-sn-glycero-3-phosphocholine + acetate + H(+). Secretory calcium-dependent phospholipase A2 that primarily targets extracellular phospholipids. Hydrolyzes the ester bond of the fatty acyl group attached at sn-2 position of phospholipids with preference for phosphatidylcholines and phosphatidylglycerols over phosphatidylethanolamines. Preferentially releases sn-2 omega-6 and omega-3 polyunsaturated fatty acyl (PUFA) chains over saturated fatty acyls. Contributes to phospholipid remodeling of very low-density lipoprotein (VLDL), low-density lipoprotein (LDL) and high-density lipoprotein (HDL) particles. Hydrolyzes LDL phospholipids releasing unsaturated fatty acids that regulate macrophage differentiation toward foam cells. Efficiently hydrolyzes and inactivates platelet activating factor (PAF), a potent lipid mediator present in oxidized LDL. May act in an autocrine and paracrine manner. Secreted by lung epithelium, targets membrane phospholipids of infiltrating eosinophils, releasing arachidonate and boosting eicosanoid and cysteinyl leukotriene synthesis involved in airway inflammatory response. Secreted by gut epithelium, hydrolyzes dietary and biliary phosphatidylcholines in the gastrointestinal lumen. Plays a stem cell regulator role in colon epithelium. Within intracellular compartment, mediates Paneth-like cell differentiation and its stem cell supporting functions by inhibiting the Wnt signaling pathway in intestinal stem cell (ISC). Secreted in the intestinal lumen upon inflammation, acts in an autocrine way and promotes prostaglandin E2 synthesis that stimulates Wnt signaling pathway in ISCs and tissue regeneration. May participate in hair follicle morphogenesis by regulating phosphatidylethanolamines metabolism at the outermost epithelial layer and facilitating melanin synthesis. By releasing lysophosphatidylcholines (LPCs) at sperm acrosome, controls sperm cell capacitation, acrosome reaction and overall fertility. May promote neurite outgrowth in neuron fibers involved in nociception. Contributes to lipid remodeling of cellular membranes and generation of lipid mediators involved in pathogen clearance. Cleaves sn-2 fatty acyl chains of phosphatidylglycerols and phosphatidylethanolamines, which are major components of membrane phospholipids in bacteria. Displays bactericidal activity against Gram-positive bacteria by directly hydrolyzing phospholipids of the bacterial membrane. In pulmonary epithelium, may contribute to host defense response against adenoviral infection. Prevents adenovirus entry into host cells by hydrolyzing host cell plasma membrane, releasing C16:0 LPCs that inhibit virus-mediated membrane fusion and viral infection. Likely prevents adenoviral entry into the endosomes of host cells. May play a role in maturation and activation of innate immune cells including macrophages, group 2 innate lymphoid cells and mast cells. In Rattus norvegicus (Rat), this protein is Group 10 secretory phospholipase A2 (Pla2g10).